The following is a 193-amino-acid chain: CASP-like protein 1E1 (193 aa).

The Cytoplasmic portion of the chain corresponds to 1–30; it reads MESQNKASLPVMDGLERRVVASQSEGASTC. Residues 31–51 traverse the membrane as a helical segment; sequence DLLLRVLALVLTLAAAIVLGV. The Extracellular portion of the chain corresponds to 52 to 86; that stretch reads DKQTKVVPIKIVDTLPAINLPVSAKWHYLSAFTYS. The chain crosses the membrane as a helical span at residues 87-107; it reads VASNAIACSYAALSLVLAVSG. Topologically, residues 108-113 are cytoplasmic; the sequence is KKGIMS. Residues 114–134 form a helical membrane-spanning segment; sequence IVIVLDLLMVAMLFSSNGAAL. Over 135–162 the chain is Extracellular; sequence AIGLMGYQGNSHVRWTKVCHVFGRFCNQ. The helical transmembrane segment at 163–183 threads the bilayer; that stretch reads VAVSISLSLLGSILFLLLVGI. Over 184-193 the chain is Cytoplasmic; sequence TSLRLHKKSK.

This sequence belongs to the Casparian strip membrane proteins (CASP) family. As to quaternary structure, homodimer and heterodimers.

It is found in the cell membrane. This Populus trichocarpa (Western balsam poplar) protein is CASP-like protein 1E1.